The sequence spans 910 residues: DnaJ-like protein MG200 homolog (910 aa).

The region spanning 4 to 73 (AKRDYYEVLG…RANYDKYGHD (70 aa)) is the J domain. Disordered stretches follow at residues 102-160 (DNLS…DDIP), 260-408 (TEPS…LEQD), and 451-486 (VLSD…STAP). Residues 111–121 (KKEKTKTKKKG) show a composition bias toward basic residues. Positions 273 to 283 (DSDAVTAATTV) are enriched in low complexity. Residues 357 to 379 (SDEADATNEPTEQDTISEPEQET) show a composition bias toward acidic residues. Polar residues predominate over residues 451–462 (VLSDQNPNPQTP).

The polypeptide is DnaJ-like protein MG200 homolog (Mycoplasma pneumoniae (strain ATCC 29342 / M129 / Subtype 1) (Mycoplasmoides pneumoniae)).